The primary structure comprises 203 residues: Glycerol-3-phosphate acyltransferase (203 aa).

6 consecutive transmembrane segments (helical) span residues 3 to 23, 51 to 71, 74 to 94, 116 to 136, 140 to 160, and 164 to 178; these read ILLA…VVVS, KAAI…VWLV, FGIG…LGHL, AVHP…AFFF, SLAA…LFGT, and PVAW…LLIW.

The protein belongs to the PlsY family. In terms of assembly, probably interacts with PlsX.

It localises to the cell inner membrane. The catalysed reaction is an acyl phosphate + sn-glycerol 3-phosphate = a 1-acyl-sn-glycero-3-phosphate + phosphate. It participates in lipid metabolism; phospholipid metabolism. Functionally, catalyzes the transfer of an acyl group from acyl-phosphate (acyl-PO(4)) to glycerol-3-phosphate (G3P) to form lysophosphatidic acid (LPA). This enzyme utilizes acyl-phosphate as fatty acyl donor, but not acyl-CoA or acyl-ACP. This Burkholderia mallei (strain ATCC 23344) protein is Glycerol-3-phosphate acyltransferase.